Reading from the N-terminus, the 139-residue chain is Large ribosomal subunit protein uL16 (139 aa).

The protein belongs to the universal ribosomal protein uL16 family. In terms of assembly, part of the 50S ribosomal subunit.

Functionally, binds 23S rRNA and is also seen to make contacts with the A and possibly P site tRNAs. This is Large ribosomal subunit protein uL16 from Chlorobium phaeobacteroides (strain DSM 266 / SMG 266 / 2430).